A 444-amino-acid polypeptide reads, in one-letter code: UDP-N-acetylmuramate--L-alanine ligase (444 aa).

Residue 110–116 (GAHGKTS) coordinates ATP.

Belongs to the MurCDEF family.

The protein localises to the cytoplasm. The enzyme catalyses UDP-N-acetyl-alpha-D-muramate + L-alanine + ATP = UDP-N-acetyl-alpha-D-muramoyl-L-alanine + ADP + phosphate + H(+). It functions in the pathway cell wall biogenesis; peptidoglycan biosynthesis. Cell wall formation. This is UDP-N-acetylmuramate--L-alanine ligase from Streptococcus pneumoniae (strain CGSP14).